We begin with the raw amino-acid sequence, 900 residues long: Methionine--tRNA ligase, cytoplasmic (900 aa).

The GST C-terminal domain maps to 74–198; it reads GWEQDDLTNQ…VLKQQGVLAL (125 aa). The 'HIGH' region motif lies at 273 to 283; the sequence is PYVNNVPHLGN. Positions 593–597 match the 'KMSKS' region motif; it reads KFSKS. Lys-596 provides a ligand contact to ATP. The residue at position 825 (Ser-825) is a Phosphoserine. Thr-835 carries the post-translational modification Phosphothreonine. A WHEP-TRS domain is found at 841 to 897; the sequence is QIQALMDEVTKQGNIVRELKAQKADKNEVAAEVAKLLDLKKQLAVAEGKPPEAPKGK.

Belongs to the class-I aminoacyl-tRNA synthetase family. In terms of assembly, monomer. Part of a multisubunit complex that groups tRNA ligases for Arg (RARS1), Asp (DARS1), Gln (QARS1), Ile (IARS1), Leu (LARS1), Lys (KARS1), Met (MARS1) the bifunctional ligase for Glu and Pro (EPRS1) and the auxiliary subunits AIMP1/p43, AIMP2/p38 and EEF1E1/p18. Forms a linear complex that contains MARS1, EEF1E1, EPRS1 and AIMP2 that is at the core of the multisubunit complex.

Its subcellular location is the cytoplasm. The protein localises to the cytosol. The protein resides in the nucleus. It is found in the nucleolus. It carries out the reaction tRNA(Met) + L-methionine + ATP = L-methionyl-tRNA(Met) + AMP + diphosphate. Its activity is regulated as follows. Enzyme activity is increased by spermidine, EEF1A1, and when the Mg(2+) concentration is increased from 5 mM to 13 mM (in vitro), possibly by promoting the dissociation of the complex between the enzyme and its product. In terms of biological role, catalyzes the specific attachment of an amino acid to its cognate tRNA in a 2 step reaction: the amino acid (AA) is first activated by ATP to form AA-AMP and then transferred to the acceptor end of the tRNA. Plays a role in the synthesis of ribosomal RNA in the nucleolus. The protein is Methionine--tRNA ligase, cytoplasmic of Homo sapiens (Human).